The primary structure comprises 229 residues: MLSRLGARALVCLAGVAMLAASGCALMPREPLVQMPTTARAEPRPIGPASGSIFQSSYAGNPLFEDRRPRNVGDILTILITENVNASKNSGTNTSRTGNAALAFDSVPRALGGLFGTSQNANINGANTMKASGGASAANTFNGTITVTVLEVLANGNLVVSGEKQMAINQGAEFIRFSGVVNPRTITGDNAVLSTQVADARIEYTAKGVIDEAQNMGWLQRFFLNVSPF.

An N-terminal signal peptide occupies residues 1–23 (MLSRLGARALVCLAGVAMLAASG). A lipid anchor (N-palmitoyl cysteine) is attached at Cys24. A lipid anchor (S-diacylglycerol cysteine) is attached at Cys24.

This sequence belongs to the FlgH family. The basal body constitutes a major portion of the flagellar organelle and consists of four rings (L,P,S, and M) mounted on a central rod.

It is found in the cell outer membrane. The protein localises to the bacterial flagellum basal body. Assembles around the rod to form the L-ring and probably protects the motor/basal body from shearing forces during rotation. The protein is Flagellar L-ring protein of Cupriavidus taiwanensis (strain DSM 17343 / BCRC 17206 / CCUG 44338 / CIP 107171 / LMG 19424 / R1) (Ralstonia taiwanensis (strain LMG 19424)).